The chain runs to 154 residues: MAARLCCQLDPARDVLCLRPVSAESCGRPVSGSLGDLSSPSPSAVPAVHGAHLSLRGLPVCAFSSAGPCALRFTSARRMETTVNAHQILPKVLHKRTLGLSAMSTTDLEAYFKDCLFKDWEELGEEIRLKVFVLGGCRHKLVCAPAPCNFFTSA.

Residues 68-117 form a mitochondrial targeting sequence region; it reads PCALRFTSARRMETTVNAHQILPKVLHKRTLGLSAMSTTDLEAYFKDCLF.

This sequence belongs to the orthohepadnavirus protein X family. As to quaternary structure, may form homodimer. May interact with host CEBPA, CFLAR, CREB1, DDB1, E4F1, HBXIP, HSPD1/HSP60, NFKBIA, POLR2E and SMAD4. Interacts with host SMC5-SMC6 complex and induces its degradation. Interacts with host TRPC4AP; leading to prevent ubiquitination of TRPC4AP. Interacts with host PLSCR1; this interaction promotes ubiquitination and degradation of HBx and impairs HBx-mediated cell proliferation. A fraction may be phosphorylated in insect cells and HepG2 cells, a human hepatoblastoma cell line. Phosphorylated in vitro by host protein kinase C or mitogen-activated protein kinase. N-acetylated in insect cells.

The protein resides in the host cytoplasm. Its subcellular location is the host nucleus. The protein localises to the host mitochondrion. In terms of biological role, multifunctional protein that plays a role in silencing host antiviral defenses and promoting viral transcription. Does not seem to be essential for HBV infection. May be directly involved in development of cirrhosis and liver cancer (hepatocellular carcinoma). Most of cytosolic activities involve modulation of cytosolic calcium. The effect on apoptosis is controversial depending on the cell types in which the studies have been conducted. May induce apoptosis by localizing in mitochondria and causing loss of mitochondrial membrane potential. May also modulate apoptosis by binding host CFLAR, a key regulator of the death-inducing signaling complex (DISC). Promotes viral transcription by using the host E3 ubiquitin ligase DDB1 to target the SMC5-SMC6 complex to proteasomal degradation. This host complex would otherwise bind to viral episomal DNA, and prevents its transcription. Moderately stimulates transcription of many different viral and cellular transcription elements. Promoters and enhancers stimulated by HBx contain DNA binding sites for NF-kappa-B, AP-1, AP-2, c-EBP, ATF/CREB, or the calcium-activated factor NF-AT. In Hepatitis B virus genotype E (isolate Chimpanzee/Ch195/1999) (HBV-E), this protein is Protein X.